Here is a 90-residue protein sequence, read N- to C-terminus: C-C motif chemokine 4 homolog (90 aa).

The first 21 residues, 1-21 (MKVSVAALAVLLIAICYQTSA), serve as a signal peptide directing secretion. 2 disulfide bridges follow: C32–C56 and C33–C72.

Belongs to the intercrine beta (chemokine CC) family. Homodimer.

Its subcellular location is the secreted. Monokine with inflammatory and chemokinetic properties. In Gallus gallus (Chicken), this protein is C-C motif chemokine 4 homolog (CCL4).